The chain runs to 381 residues: Cobalt-precorrin-5B C(1)-methyltransferase (381 aa).

The protein belongs to the CbiD family.

The enzyme catalyses Co-precorrin-5B + S-adenosyl-L-methionine = Co-precorrin-6A + S-adenosyl-L-homocysteine. It functions in the pathway cofactor biosynthesis; adenosylcobalamin biosynthesis; cob(II)yrinate a,c-diamide from sirohydrochlorin (anaerobic route): step 6/10. Its function is as follows. Catalyzes the methylation of C-1 in cobalt-precorrin-5B to form cobalt-precorrin-6A. The sequence is that of Cobalt-precorrin-5B C(1)-methyltransferase from Prochlorococcus marinus (strain NATL1A).